Consider the following 375-residue polypeptide: Acetylornithine aminotransferase (375 aa).

Pyridoxal 5'-phosphate is bound by residues 93–94 (GT) and phenylalanine 120. Residue arginine 123 participates in N(2)-acetyl-L-ornithine binding. 205–208 (DEVQ) serves as a coordination point for pyridoxal 5'-phosphate. Lysine 234 is modified (N6-(pyridoxal phosphate)lysine). Threonine 262 contacts N(2)-acetyl-L-ornithine. Threonine 263 contacts pyridoxal 5'-phosphate.

It belongs to the class-III pyridoxal-phosphate-dependent aminotransferase family. ArgD subfamily. Homodimer. Pyridoxal 5'-phosphate is required as a cofactor.

The protein resides in the cytoplasm. It carries out the reaction N(2)-acetyl-L-ornithine + 2-oxoglutarate = N-acetyl-L-glutamate 5-semialdehyde + L-glutamate. The protein operates within amino-acid biosynthesis; L-arginine biosynthesis; N(2)-acetyl-L-ornithine from L-glutamate: step 4/4. In Staphylococcus epidermidis (strain ATCC 35984 / DSM 28319 / BCRC 17069 / CCUG 31568 / BM 3577 / RP62A), this protein is Acetylornithine aminotransferase.